A 431-amino-acid chain; its full sequence is L-ornithine N(5)-monooxygenase (431 aa).

FAD-binding positions include 40-48 (EKLPTFSWH) and glutamine 59. Substrate is bound at residue lysine 64. NADP(+)-binding positions include 202–205 (CGQS) and arginine 228. Residues 242 to 245 (NSLY) and asparagine 273 contribute to the substrate site. Position 273–275 (273–275 (NYS)) interacts with NADP(+). 399-401 (TLL) provides a ligand contact to FAD. Serine 402 is a substrate binding site.

Belongs to the lysine N(6)-hydroxylase/L-ornithine N(5)-oxygenase family. It depends on FAD as a cofactor.

It localises to the cytoplasm. Its subcellular location is the nucleus. The enzyme catalyses L-ornithine + NADPH + O2 = N(5)-hydroxy-L-ornithine + NADP(+) + H2O. The catalysed reaction is L-ornithine + NADH + O2 = N(5)-hydroxy-L-ornithine + NAD(+) + H2O. Its pathway is siderophore biosynthesis; ferrichrome biosynthesis. Its function is as follows. Catalyzes the conversion of L-ornithine to N(5)-hydroxyornithine, the first step in the biosynthesis of all hydroxamate-containing siderophores, such as ferrichrome. The polypeptide is L-ornithine N(5)-monooxygenase (Schizosaccharomyces pombe (strain 972 / ATCC 24843) (Fission yeast)).